The primary structure comprises 112 residues: Thioredoxin (112 aa).

Residues Ser2–Leu112 form the Thioredoxin domain. Cys35 and Cys38 are oxidised to a cystine.

It belongs to the thioredoxin family.

In terms of biological role, participates in various redox reactions through the reversible oxidation of its active center dithiol to a disulfide and catalyzes dithiol-disulfide exchange reactions. This is Thioredoxin (trxA) from Mycolicibacterium smegmatis (Mycobacterium smegmatis).